The primary structure comprises 92 residues: Probable glutathione transferase (92 aa).

In terms of domain architecture, GST N-terminal spans 1–71 (RTCPYAQRAR…YLEEAFPDPP (71 aa)). Cys-3 acts as the Nucleophile in catalysis. Residues Lys-30, Val-43, and 55–56 (ES) contribute to the glutathione site.

Belongs to the GST superfamily. Omega family.

It carries out the reaction RX + glutathione = an S-substituted glutathione + a halide anion + H(+). The catalysed reaction is L-dehydroascorbate + 2 glutathione = glutathione disulfide + L-ascorbate. It catalyses the reaction methylarsonate + 2 glutathione + H(+) = methylarsonous acid + glutathione disulfide + H2O. Exhibits glutathione-dependent thiol transferase activity. Has dehydroascorbate reductase activity and may contribute to the recycling of ascorbic acid. Participates in the biotransformation of inorganic arsenic and reduces monomethylarsonic acid (MMA). This chain is Probable glutathione transferase, found in Aplysia californica (California sea hare).